We begin with the raw amino-acid sequence, 548 residues long: Chaperonin GroEL (548 aa).

ATP-binding positions include 29–32, lysine 50, 86–90, glycine 413, 479–481, and aspartate 496; these read TLGP, DGTTT, and NAA.

Belongs to the chaperonin (HSP60) family. In terms of assembly, forms a cylinder of 14 subunits composed of two heptameric rings stacked back-to-back. Interacts with the co-chaperonin GroES.

It localises to the cytoplasm. It carries out the reaction ATP + H2O + a folded polypeptide = ADP + phosphate + an unfolded polypeptide.. Functionally, together with its co-chaperonin GroES, plays an essential role in assisting protein folding. The GroEL-GroES system forms a nano-cage that allows encapsulation of the non-native substrate proteins and provides a physical environment optimized to promote and accelerate protein folding. The sequence is that of Chaperonin GroEL from Deinococcus radiodurans (strain ATCC 13939 / DSM 20539 / JCM 16871 / CCUG 27074 / LMG 4051 / NBRC 15346 / NCIMB 9279 / VKM B-1422 / R1).